The primary structure comprises 227 residues: Cytochrome c oxidase subunit 2 (227 aa).

Topologically, residues M1–S14 are mitochondrial intermembrane. Residues P15–M45 form a helical membrane-spanning segment. Residues L46 to Q59 are Mitochondrial matrix-facing. A helical membrane pass occupies residues E60–M87. Residues D88 to L227 are Mitochondrial intermembrane-facing. 6 residues coordinate Cu cation: H161, C196, E198, C200, H204, and M207. E198 serves as a coordination point for Mg(2+).

It belongs to the cytochrome c oxidase subunit 2 family. Component of the cytochrome c oxidase (complex IV, CIV), a multisubunit enzyme composed of 14 subunits. The complex is composed of a catalytic core of 3 subunits MT-CO1, MT-CO2 and MT-CO3, encoded in the mitochondrial DNA, and 11 supernumerary subunits COX4I, COX5A, COX5B, COX6A, COX6B, COX6C, COX7A, COX7B, COX7C, COX8 and NDUFA4, which are encoded in the nuclear genome. The complex exists as a monomer or a dimer and forms supercomplexes (SCs) in the inner mitochondrial membrane with NADH-ubiquinone oxidoreductase (complex I, CI) and ubiquinol-cytochrome c oxidoreductase (cytochrome b-c1 complex, complex III, CIII), resulting in different assemblies (supercomplex SCI(1)III(2)IV(1) and megacomplex MCI(2)III(2)IV(2)). Found in a complex with TMEM177, COA6, COX18, COX20, SCO1 and SCO2. Interacts with TMEM177 in a COX20-dependent manner. Interacts with COX20. Interacts with COX16. Requires Cu cation as cofactor.

The protein resides in the mitochondrion inner membrane. The catalysed reaction is 4 Fe(II)-[cytochrome c] + O2 + 8 H(+)(in) = 4 Fe(III)-[cytochrome c] + 2 H2O + 4 H(+)(out). Functionally, component of the cytochrome c oxidase, the last enzyme in the mitochondrial electron transport chain which drives oxidative phosphorylation. The respiratory chain contains 3 multisubunit complexes succinate dehydrogenase (complex II, CII), ubiquinol-cytochrome c oxidoreductase (cytochrome b-c1 complex, complex III, CIII) and cytochrome c oxidase (complex IV, CIV), that cooperate to transfer electrons derived from NADH and succinate to molecular oxygen, creating an electrochemical gradient over the inner membrane that drives transmembrane transport and the ATP synthase. Cytochrome c oxidase is the component of the respiratory chain that catalyzes the reduction of oxygen to water. Electrons originating from reduced cytochrome c in the intermembrane space (IMS) are transferred via the dinuclear copper A center (CU(A)) of subunit 2 and heme A of subunit 1 to the active site in subunit 1, a binuclear center (BNC) formed by heme A3 and copper B (CU(B)). The BNC reduces molecular oxygen to 2 water molecules using 4 electrons from cytochrome c in the IMS and 4 protons from the mitochondrial matrix. This chain is Cytochrome c oxidase subunit 2 (MT-CO2), found in Cavia aperea (Brazilian guinea pig).